The primary structure comprises 454 residues: MNIVILAAGMGKRMHSDLPKVLHPVAGRPMLAHVIDTARTLSPSRLVVVIGHGAERVREAVAADDVTFAEQDQQLGTGHAVMQALPQLDDNQPTLVLYGDVPLTTAATLKALVEAAGNTRFGVLTVEMPDPTGYGRIVRDAAGSIVRIVEQKDASEAVRAIREINTGIIVCPTGHLRRWLATLRNDNAQGEYYLTDTVERAATEGIDIVSAQPAALWETLGVNSKVQLAEVERIHQRNLAQRLLETGVTLADPARIDVRGELTCGRDVSIDIGCVFEGRVHLGDGVQIGANCVIRNSSIDAGAQVQPFCHIDSAKIGADGRIGPYARLRPGTELGEDVHIGNFVEVKNSQVAAHSKANHLAYVGDATVGARVNIGAGTITCNYDGANKFRTVIEDDVFIGSDTQLVAPVTVRRGATIGAGTTLTKEAPADKLTLSRAKQMTLDAWQRPVKKAKQ.

The pyrophosphorylase stretch occupies residues 1–225 (MNIVILAAGM…LWETLGVNSK (225 aa)). UDP-N-acetyl-alpha-D-glucosamine is bound by residues 6-9 (LAAG), Lys20, Gln71, 76-77 (GT), 98-100 (YGD), Gly135, Glu150, Asn165, and Asn223. Position 100 (Asp100) interacts with Mg(2+). Residue Asn223 coordinates Mg(2+). The segment at 226 to 246 (VQLAEVERIHQRNLAQRLLET) is linker. The tract at residues 247–454 (GVTLADPARI…WQRPVKKAKQ (208 aa)) is N-acetyltransferase. Arg329 and Lys347 together coordinate UDP-N-acetyl-alpha-D-glucosamine. Residue His359 is the Proton acceptor of the active site. Tyr362 and Asn373 together coordinate UDP-N-acetyl-alpha-D-glucosamine. Acetyl-CoA contacts are provided by residues Ala376, 382–383 (NY), Ser401, Ala419, and Arg436.

It in the N-terminal section; belongs to the N-acetylglucosamine-1-phosphate uridyltransferase family. This sequence in the C-terminal section; belongs to the transferase hexapeptide repeat family. As to quaternary structure, homotrimer. Mg(2+) serves as cofactor.

The protein resides in the cytoplasm. It catalyses the reaction alpha-D-glucosamine 1-phosphate + acetyl-CoA = N-acetyl-alpha-D-glucosamine 1-phosphate + CoA + H(+). The enzyme catalyses N-acetyl-alpha-D-glucosamine 1-phosphate + UTP + H(+) = UDP-N-acetyl-alpha-D-glucosamine + diphosphate. The protein operates within nucleotide-sugar biosynthesis; UDP-N-acetyl-alpha-D-glucosamine biosynthesis; N-acetyl-alpha-D-glucosamine 1-phosphate from alpha-D-glucosamine 6-phosphate (route II): step 2/2. It functions in the pathway nucleotide-sugar biosynthesis; UDP-N-acetyl-alpha-D-glucosamine biosynthesis; UDP-N-acetyl-alpha-D-glucosamine from N-acetyl-alpha-D-glucosamine 1-phosphate: step 1/1. Its pathway is bacterial outer membrane biogenesis; LPS lipid A biosynthesis. Its function is as follows. Catalyzes the last two sequential reactions in the de novo biosynthetic pathway for UDP-N-acetylglucosamine (UDP-GlcNAc). The C-terminal domain catalyzes the transfer of acetyl group from acetyl coenzyme A to glucosamine-1-phosphate (GlcN-1-P) to produce N-acetylglucosamine-1-phosphate (GlcNAc-1-P), which is converted into UDP-GlcNAc by the transfer of uridine 5-monophosphate (from uridine 5-triphosphate), a reaction catalyzed by the N-terminal domain. This Cupriavidus pinatubonensis (strain JMP 134 / LMG 1197) (Cupriavidus necator (strain JMP 134)) protein is Bifunctional protein GlmU.